A 440-amino-acid polypeptide reads, in one-letter code: Enolase 1-2 (440 aa).

Positions 160 and 169 each coordinate substrate. E212 serves as the catalytic Proton donor. Mg(2+)-binding residues include D247, E296, and D321. Substrate-binding residues include E296 and D321. K346 acts as the Proton acceptor in catalysis. Residues 373–376 (SHRS) and K397 contribute to the substrate site.

It belongs to the enolase family. In terms of assembly, homodimer. Mg(2+) is required as a cofactor.

Its subcellular location is the cytoplasm. The enzyme catalyses (2R)-2-phosphoglycerate = phosphoenolpyruvate + H2O. The protein operates within carbohydrate degradation; glycolysis; pyruvate from D-glyceraldehyde 3-phosphate: step 4/5. This chain is Enolase 1-2 (eno102), found in Schizosaccharomyces pombe (strain 972 / ATCC 24843) (Fission yeast).